Consider the following 180-residue polypeptide: Translation initiation factor IF-3 (180 aa).

Belongs to the IF-3 family. In terms of assembly, monomer.

It is found in the cytoplasm. IF-3 binds to the 30S ribosomal subunit and shifts the equilibrium between 70S ribosomes and their 50S and 30S subunits in favor of the free subunits, thus enhancing the availability of 30S subunits on which protein synthesis initiation begins. The sequence is that of Translation initiation factor IF-3 from Shewanella oneidensis (strain ATCC 700550 / JCM 31522 / CIP 106686 / LMG 19005 / NCIMB 14063 / MR-1).